The following is a 359-amino-acid chain: MAINTDTSGKQKALTMVLNQIERSFGKGAIMRLGDATRMRVETISSGALTLDLALGGGLPKGRVIEIYGPESSGKTTVALHALAEVQRNGGIAAFVDAEHALDPTYAAALGVDIDNLLISQPDTGESALEIVDQLVRSAAVDIVVIDSVAALVPRAEIEGDMGDAHVGLQARLMSQALRKITGNIGKSGCTVIFINQLRQKIGVTYGSPETTTGGNALKFYASVRLDIRRIQTLKKGTDEYGNRVKVKVAKNKVAPPFRIAEFDIIFGKGISTLGCVVDLAEETGIIIRKGAWYSYNGDNISQGRDNAIKYLEEKPEFAEEIKKLVREKLDKGAVVSANSVAKASEEDEEEEVDLEPEE.

Residue 69–76 (GPESSGKT) participates in ATP binding. The tract at residues 337-359 (SANSVAKASEEDEEEEVDLEPEE) is disordered. Residues 346–359 (EEDEEEEVDLEPEE) are compositionally biased toward acidic residues.

It belongs to the RecA family.

It localises to the cytoplasm. Its function is as follows. Can catalyze the hydrolysis of ATP in the presence of single-stranded DNA, the ATP-dependent uptake of single-stranded DNA by duplex DNA, and the ATP-dependent hybridization of homologous single-stranded DNAs. It interacts with LexA causing its activation and leading to its autocatalytic cleavage. The sequence is that of Protein RecA from Nostoc punctiforme (strain ATCC 29133 / PCC 73102).